We begin with the raw amino-acid sequence, 374 residues long: Alanine racemase (374 aa).

Lysine 44 serves as the catalytic Proton acceptor; specific for D-alanine. Lysine 44 bears the N6-(pyridoxal phosphate)lysine mark. Arginine 139 contributes to the substrate binding site. Tyrosine 269 functions as the Proton acceptor; specific for L-alanine in the catalytic mechanism. Methionine 317 lines the substrate pocket.

Belongs to the alanine racemase family. Requires pyridoxal 5'-phosphate as cofactor.

The catalysed reaction is L-alanine = D-alanine. Its pathway is amino-acid biosynthesis; D-alanine biosynthesis; D-alanine from L-alanine: step 1/1. Catalyzes the interconversion of L-alanine and D-alanine. May also act on other amino acids. The polypeptide is Alanine racemase (alr) (Bordetella avium (strain 197N)).